The sequence spans 356 residues: GDP-mannose:di-myo-inositol-1,3'-phosphate beta-1,2-mannosyltransferase (356 aa).

Belongs to the MDIP synthase family. It depends on Mg(2+) as a cofactor.

The catalysed reaction is bis(myo-inositol) 1,3'-phosphate + GDP-alpha-D-mannose = 2-O-(beta-D-mannosyl)-bis(myo-inositol) 1,3'-phosphate + GDP + H(+). The enzyme catalyses 2-O-(beta-D-mannosyl)-bis(myo-inositol) 1,3'-phosphate + GDP-alpha-D-mannose = 2-O-(beta-D-mannosyl-(1-&gt;2)-beta-D-mannosyl)-bis(myo-inositol) 1,3'-phosphate + GDP + H(+). It carries out the reaction bis(myo-inositol) 1,3'-phosphate + 2 GDP-alpha-D-mannose = 2-O-(beta-D-mannosyl-(1-&gt;2)-beta-D-mannosyl)-bis(myo-inositol) 1,3'-phosphate + 2 GDP + 2 H(+). In terms of biological role, catalyzes the transfer of the mannosyl group from GDP-mannose to di-myo-inositol-1,3'-phosphate (DIP), producing mannosyl-di-myo-inositol phosphate (MDIP). Can also use MDIP as an acceptor of a second mannose residue, yielding di-mannosyl-di-myo-inositol phosphate (MMDIP). The chain is GDP-mannose:di-myo-inositol-1,3'-phosphate beta-1,2-mannosyltransferase from Aquifex aeolicus (strain VF5).